Reading from the N-terminus, the 492-residue chain is Ribulose bisphosphate carboxylase large chain (492 aa).

Residues N131 and T181 each contribute to the substrate site. The active-site Proton acceptor is the K183. K185 is a binding site for substrate. The Mg(2+) site is built by K209, D211, and E212. Position 209 is an N6-carboxylysine (K209). H301 (proton acceptor) is an active-site residue. Residues R302, H334, and S386 each coordinate substrate.

It belongs to the RuBisCO large chain family. Type I subfamily. In terms of assembly, heterohexadecamer of 8 large chains and 8 small chains. Mg(2+) serves as cofactor.

The catalysed reaction is 2 (2R)-3-phosphoglycerate + 2 H(+) = D-ribulose 1,5-bisphosphate + CO2 + H2O. It carries out the reaction D-ribulose 1,5-bisphosphate + O2 = 2-phosphoglycolate + (2R)-3-phosphoglycerate + 2 H(+). Its function is as follows. RuBisCO catalyzes two reactions: the carboxylation of D-ribulose 1,5-bisphosphate, the primary event in carbon dioxide fixation, as well as the oxidative fragmentation of the pentose substrate. Both reactions occur simultaneously and in competition at the same active site. This Nitrosococcus oceani (strain ATCC 19707 / BCRC 17464 / JCM 30415 / NCIMB 11848 / C-107) protein is Ribulose bisphosphate carboxylase large chain.